Consider the following 288-residue polypeptide: Bifunctional protein FolD (288 aa).

Residues glycine 166 to serine 168 and isoleucine 232 contribute to the NADP(+) site.

It belongs to the tetrahydrofolate dehydrogenase/cyclohydrolase family. In terms of assembly, homodimer.

It carries out the reaction (6R)-5,10-methylene-5,6,7,8-tetrahydrofolate + NADP(+) = (6R)-5,10-methenyltetrahydrofolate + NADPH. The catalysed reaction is (6R)-5,10-methenyltetrahydrofolate + H2O = (6R)-10-formyltetrahydrofolate + H(+). The protein operates within one-carbon metabolism; tetrahydrofolate interconversion. In terms of biological role, catalyzes the oxidation of 5,10-methylenetetrahydrofolate to 5,10-methenyltetrahydrofolate and then the hydrolysis of 5,10-methenyltetrahydrofolate to 10-formyltetrahydrofolate. The polypeptide is Bifunctional protein FolD (Shigella dysenteriae serotype 1 (strain Sd197)).